Reading from the N-terminus, the 278-residue chain is MNSISNQTIPHQASRYQAAFSRLKAEGRGAFVPFVTLGDPSPELSLKIIDTLVQNGADALELGFPFSDPLADGPVIQGANLRALAAGTTPTACFELLAKIRAKYPELPIGLLLYANLVFANGIDAFYAKAQQAGVDSVLIADVPVEEAAPFIQAAKAHGIAPIFIAPPNADSDTLAKVSQSGEGYTYLLSRAGVTGADTKAGTPVEEILAKLQEFNAPPPLLGFGIAEPAQVSAAIKAGAAGAISGSAVVKIIETHQQDEVKLLAALGEFTRTMKAAT.

Active-site proton acceptor residues include E61 and D72.

It belongs to the TrpA family. As to quaternary structure, tetramer of two alpha and two beta chains.

It catalyses the reaction (1S,2R)-1-C-(indol-3-yl)glycerol 3-phosphate + L-serine = D-glyceraldehyde 3-phosphate + L-tryptophan + H2O. It functions in the pathway amino-acid biosynthesis; L-tryptophan biosynthesis; L-tryptophan from chorismate: step 5/5. The alpha subunit is responsible for the aldol cleavage of indoleglycerol phosphate to indole and glyceraldehyde 3-phosphate. The sequence is that of Tryptophan synthase alpha chain from Shewanella oneidensis (strain ATCC 700550 / JCM 31522 / CIP 106686 / LMG 19005 / NCIMB 14063 / MR-1).